Here is a 247-residue protein sequence, read N- to C-terminus: E3 SUMO-protein ligase NSE2 (247 aa).

An N-acetylmethionine modification is found at Met1. Residues Lys90 and Lys107 each participate in a glycyl lysine isopeptide (Lys-Gly) (interchain with G-Cter in SUMO2) cross-link. Ser116 is modified (phosphoserine). Residues Lys125 and Lys130 each participate in a glycyl lysine isopeptide (Lys-Gly) (interchain with G-Cter in SUMO2) cross-link. The segment at 154–240 adopts an SP-RING-type zinc-finger fold; sequence VDEDIIVTQS…LRRAIENHNK (87 aa). Residues Cys185, His187, Cys210, and Cys215 each coordinate Zn(2+).

This sequence belongs to the NSE2 family. In terms of assembly, component of the SMC5-SMC6 complex which consists at least of SMC5, SMC6, NSMCE2, NSMCE1, NSMCE4A or EID3 and NSMCE3. Post-translationally, sumoylated, possibly via autosumoylation.

It localises to the nucleus. Its subcellular location is the chromosome. The protein localises to the telomere. The protein resides in the PML body. It functions in the pathway protein modification; protein sumoylation. Functionally, E3 SUMO-protein ligase component of the SMC5-SMC6 complex, a complex involved in DNA double-strand break repair by homologous recombination. Is not be required for the stability of the complex. The complex may promote sister chromatid homologous recombination by recruiting the SMC1-SMC3 cohesin complex to double-strand breaks. The complex is required for telomere maintenance via recombination in ALT (alternative lengthening of telomeres) cell lines and mediates sumoylation of shelterin complex (telosome) components which is proposed to lead to shelterin complex disassembly in ALT-associated PML bodies (APBs). Acts as an E3 ligase mediating SUMO attachment to various proteins such as SMC6L1 and TSNAX, the shelterin complex subunits TERF1, TERF2, TINF2 and TERF2IP, RAD51AP1, and maybe the cohesin components RAD21 and STAG2. Required for recruitment of telomeres to PML nuclear bodies. SUMO protein-ligase activity is required for the prevention of DNA damage-induced apoptosis by facilitating DNA repair, and for formation of APBs in ALT cell lines. Required for sister chromatid cohesion during prometaphase and mitotic progression. The sequence is that of E3 SUMO-protein ligase NSE2 (NSMCE2) from Homo sapiens (Human).